We begin with the raw amino-acid sequence, 558 residues long: Factor VII-activating protease (558 aa).

An N-terminal signal peptide occupies residues 1 to 23 (MFARMSDLHVLLLMVLAGKTAFG). Asn-54 carries an N-linked (GlcNAc...) asparagine glycan. 3 EGF-like domains span residues 71–107 (EDDP…NRCQ), 109–146 (VQNK…SDCS), and 148–186 (VVPV…KLCE). 18 cysteine pairs are disulfide-bonded: Cys-75–Cys-86, Cys-80–Cys-95, Cys-97–Cys-106, Cys-113–Cys-123, Cys-118–Cys-134, Cys-136–Cys-145, Cys-152–Cys-163, Cys-157–Cys-174, Cys-176–Cys-185, Cys-192–Cys-274, Cys-213–Cys-255, Cys-244–Cys-269, Cys-299–Cys-433, Cys-345–Cys-361, Cys-353–Cys-422, Cys-445–Cys-513, Cys-475–Cys-491, and Cys-503–Cys-531. A Kringle domain is found at 191 to 274 (DCYVDDGYSY…KWEYCDVPAC (84 aa)). A Peptidase S1 domain is found at 312-553 (IFGGFKSTAG…FLTWIKATME (242 aa)). Residues His-360 and Asp-409 each act as charge relay system in the active site. The active-site Charge relay system is the Ser-507.

This sequence belongs to the peptidase S1 family. Heterodimer; disulfide-linked. Heterodimer of a 50 kDa heavy and a 27 kDa light chain linked by a disulfide bond. Proteolytic cleavage at Gly-23 or Leu-27 can give rise to the 50 kDa heavy chain (HC) and cleavage at Arg-311 or Lys-317 can give rise to the 27 kDa light chain (LC). The HC can undergo further proteolytic cleavage giving rise to a 26 kDa fragment. The LC can undergo further proteolytic cleavage at Arg-311 leading to a 17-kDa fragment and at Arg-478 leading to a 8-kDa fragment.

The protein resides in the secreted. Its function is as follows. Cleaves the alpha-chain at multiple sites and the beta-chain between 'Lys-53' and 'Lys-54' but not the gamma-chain of fibrinogen and therefore does not initiate the formation of the fibrin clot and does not cause the fibrinolysis directly. It does not cleave (activate) prothrombin and plasminogen but converts the inactive single chain urinary plasminogen activator (pro-urokinase) to the active two chain form. Activates coagulation factor VII. May function as a tumor suppressor negatively regulating cell proliferation and cell migration. This Bos taurus (Bovine) protein is Factor VII-activating protease (HABP2).